Here is a 762-residue protein sequence, read N- to C-terminus: 5-methyltetrahydropteroyltriglutamate--homocysteine methyltransferase (762 aa).

Residues 17–20 (REWK) and Lys-111 contribute to the 5-methyltetrahydropteroyltri-L-glutamate site. Residues 435-437 (IGS) and Glu-488 each bind L-homocysteine. Residues 435-437 (IGS) and Glu-488 each bind L-methionine. 5-methyltetrahydropteroyltri-L-glutamate-binding positions include 519–520 (RC) and Trp-565. Asp-603 is a binding site for L-homocysteine. Residue Asp-603 coordinates L-methionine. Position 609 (Glu-609) interacts with 5-methyltetrahydropteroyltri-L-glutamate. The Zn(2+) site is built by His-645, Cys-647, and Glu-669. The active-site Proton donor is His-698. Position 730 (Cys-730) interacts with Zn(2+).

The protein belongs to the vitamin-B12 independent methionine synthase family. The cofactor is Zn(2+).

It catalyses the reaction 5-methyltetrahydropteroyltri-L-glutamate + L-homocysteine = tetrahydropteroyltri-L-glutamate + L-methionine. It functions in the pathway amino-acid biosynthesis; L-methionine biosynthesis via de novo pathway; L-methionine from L-homocysteine (MetE route): step 1/1. Its function is as follows. Catalyzes the transfer of a methyl group from 5-methyltetrahydrofolate to homocysteine resulting in methionine formation. In Bacillus anthracis (strain A0248), this protein is 5-methyltetrahydropteroyltriglutamate--homocysteine methyltransferase.